A 252-amino-acid chain; its full sequence is MVSWIISRLVVLIFGTLYPAYSSYKAVKTKNVKEYVKWMMYWIVFAFFTTAETLTDIVLSWFPFYFELKIAFVIWLLSPYTKGSSVLYRKFVHPTLSNKEKEIDEYITQARDKSYETMMRVGKRGLNLAANAAVTAAAKGVLSEKLRSFSMQDLTLIRDEDALPLQRPDGRLRPSPGSLLDTIEDLGDDPALSLRSSTNPADSRTEASEDDMGDKAPKRAKPIKKAPKAEPLASKTLKTRPKKKTSGGGDSA.

The next 2 membrane-spanning stretches (helical) occupy residues 1-21 and 35-55; these read MVSW…YPAY and YVKW…ETLT. Residue Ser150 is modified to Phosphoserine. A disordered region spans residues 165–252; that stretch reads LQRPDGRLRP…KKTSGGGDSA (88 aa). Basic and acidic residues predominate over residues 203–217; that stretch reads SRTEASEDDMGDKAP.

This sequence belongs to the DP1 family. In terms of assembly, interacts with odorant receptor proteins. Detected in brain, heart and skeletal muscle, and at low levels in placenta, kidney and pancreas. Expressed in circumvallate papillae.

The protein localises to the membrane. Functionally, required for endoplasmic reticulum (ER) network formation, shaping and remodeling. May enhance the cell surface expression of odorant receptors. The polypeptide is Receptor expression-enhancing protein 2 (REEP2) (Homo sapiens (Human)).